A 307-amino-acid polypeptide reads, in one-letter code: Aspartate carbamoyltransferase catalytic subunit (307 aa).

R56 and T57 together coordinate carbamoyl phosphate. Residue K84 coordinates L-aspartate. Residues R106, H136, and Q139 each coordinate carbamoyl phosphate. L-aspartate is bound by residues R169 and R221. Residues A262 and P263 each coordinate carbamoyl phosphate.

It belongs to the aspartate/ornithine carbamoyltransferase superfamily. ATCase family. Heterododecamer (2C3:3R2) of six catalytic PyrB chains organized as two trimers (C3), and six regulatory PyrI chains organized as three dimers (R2).

It catalyses the reaction carbamoyl phosphate + L-aspartate = N-carbamoyl-L-aspartate + phosphate + H(+). It participates in pyrimidine metabolism; UMP biosynthesis via de novo pathway; (S)-dihydroorotate from bicarbonate: step 2/3. Functionally, catalyzes the condensation of carbamoyl phosphate and aspartate to form carbamoyl aspartate and inorganic phosphate, the committed step in the de novo pyrimidine nucleotide biosynthesis pathway. This chain is Aspartate carbamoyltransferase catalytic subunit, found in Streptococcus pneumoniae (strain P1031).